The sequence spans 407 residues: Histidine--tRNA ligase (407 aa).

Belongs to the class-II aminoacyl-tRNA synthetase family. In terms of assembly, homodimer.

The protein resides in the cytoplasm. The enzyme catalyses tRNA(His) + L-histidine + ATP = L-histidyl-tRNA(His) + AMP + diphosphate + H(+). This Wolbachia pipientis subsp. Culex pipiens (strain wPip) protein is Histidine--tRNA ligase.